Here is a 433-residue protein sequence, read N- to C-terminus: Trigger factor (433 aa).

In terms of domain architecture, PPIase FKBP-type spans glycine 163–proline 248.

This sequence belongs to the FKBP-type PPIase family. Tig subfamily.

The protein localises to the cytoplasm. It carries out the reaction [protein]-peptidylproline (omega=180) = [protein]-peptidylproline (omega=0). Involved in protein export. Acts as a chaperone by maintaining the newly synthesized protein in an open conformation. Functions as a peptidyl-prolyl cis-trans isomerase. The polypeptide is Trigger factor (Nitratidesulfovibrio vulgaris (strain ATCC 29579 / DSM 644 / CCUG 34227 / NCIMB 8303 / VKM B-1760 / Hildenborough) (Desulfovibrio vulgaris)).